A 160-amino-acid polypeptide reads, in one-letter code: Large ribosomal subunit protein uL22c (160 aa).

This sequence belongs to the universal ribosomal protein uL22 family. Part of the 50S ribosomal subunit.

The protein localises to the plastid. It localises to the chloroplast. This protein binds specifically to 23S rRNA. Functionally, the globular domain of the protein is located near the polypeptide exit tunnel on the outside of the subunit, while an extended beta-hairpin is found that lines the wall of the exit tunnel in the center of the 70S ribosome. The protein is Large ribosomal subunit protein uL22c (rpl22) of Arabis hirsuta (Hairy rock-cress).